Consider the following 609-residue polypeptide: Cell division protein DipM (609 aa).

The N-terminal stretch at 1 to 24 is a signal peptide; sequence MRQLWTQAAVIALTAGTLGAPAHA. The tract at residues 21–103 is disordered; the sequence is PAHASGQSGQ…PVLRATPPRT (83 aa). The span at 25 to 38 shows a compositional bias: polar residues; the sequence is SGQSGQRFTPNFPI. The span at 79–93 shows a compositional bias: pro residues; the sequence is LPPPAPVSTPAPAPQ. 2 LysM domains span residues 121–165 and 171–215; these read QVRV…KIKG and KAYV…KLLL. 2 stretches are compositionally biased toward low complexity: residues 242–258 and 265–280; these read AEPA…AATP and PVSE…STTT. Residues 242-280 are disordered; the sequence is AEPAPATTRPATPAATPSRPVRQPVSEETSEPATTSTTT. 2 consecutive LysM domains span residues 295 to 339 and 345 to 389; these read QVHT…KIKG and KAYS…KIAL. The interval 389-457 is disordered; that stretch reads LPDGFRDKGP…AAQPITPPPS (69 aa). Positions 400–429 are enriched in low complexity; the sequence is RTTTTTRPATPPANTYARVDSSAAAASTPS. Residues 503-603 are lytM; sequence NDGLNIRAPQ…VKDKAKPVDP (101 aa).

The protein localises to the periplasm. Functionally, required for efficient cell division, cell polarity and normal cell morphology. Facilitates remodeling of the peptidoglycan layer and, thus, coordinated constriction of the cell envelope during the division process. Plays a critical role in maintaining proper cell envelope architecture during growth and division. Required for normal envelope invagination during cell division and to establish or maintain outer membrane connections throughout the cell envelope. May serve as a regulatory hub coordinating the activities of multiple peptidoglycan-degrading enzymes during cell constriction. Required to position SdpA and SdpB at midcell. The sequence is that of Cell division protein DipM from Caulobacter vibrioides (strain NA1000 / CB15N) (Caulobacter crescentus).